The primary structure comprises 408 residues: Serine/threonine transporter SstT (408 aa).

The next 9 membrane-spanning stretches (helical) occupy residues Leu11–Ala31, Phe43–Leu63, Pro81–Ser101, Ala141–Leu161, Ile192–Gly212, Leu216–Val236, Met298–Ile318, Val330–Ile350, and Phe357–Ile377.

Belongs to the dicarboxylate/amino acid:cation symporter (DAACS) (TC 2.A.23) family.

It is found in the cell inner membrane. It carries out the reaction L-serine(in) + Na(+)(in) = L-serine(out) + Na(+)(out). The catalysed reaction is L-threonine(in) + Na(+)(in) = L-threonine(out) + Na(+)(out). In terms of biological role, involved in the import of serine and threonine into the cell, with the concomitant import of sodium (symport system). The polypeptide is Serine/threonine transporter SstT (Shewanella sp. (strain W3-18-1)).